We begin with the raw amino-acid sequence, 258 residues long: uncharacterized protein (258 aa).

A signal peptide spans Met-1–Ala-23. The Cytoplasmic segment spans residues Cys-24–Gly-64. The helical transmembrane segment at Val-65–Val-85 threads the bilayer. The Extracellular segment spans residues Asp-86–Ser-123. An N-linked (GlcNAc...) asparagine glycan is attached at Asn-118. Residues Val-124–Thr-144 traverse the membrane as a helical segment. Residues Cys-145–Ser-230 are Cytoplasmic-facing. Residues Ile-231–Val-251 traverse the membrane as a helical segment. The Extracellular segment spans residues Leu-252–Ser-258.

The protein localises to the membrane. This is an uncharacterized protein from Saccharomyces cerevisiae (strain ATCC 204508 / S288c) (Baker's yeast).